We begin with the raw amino-acid sequence, 465 residues long: UDP-N-acetylmuramoylalanine--D-glutamate ligase (465 aa).

127–133 serves as a coordination point for ATP; that stretch reads GSNGKST.

It belongs to the MurCDEF family.

The protein localises to the cytoplasm. The enzyme catalyses UDP-N-acetyl-alpha-D-muramoyl-L-alanine + D-glutamate + ATP = UDP-N-acetyl-alpha-D-muramoyl-L-alanyl-D-glutamate + ADP + phosphate + H(+). Its pathway is cell wall biogenesis; peptidoglycan biosynthesis. Cell wall formation. Catalyzes the addition of glutamate to the nucleotide precursor UDP-N-acetylmuramoyl-L-alanine (UMA). This is UDP-N-acetylmuramoylalanine--D-glutamate ligase from Cereibacter sphaeroides (strain ATCC 17025 / ATH 2.4.3) (Rhodobacter sphaeroides).